The sequence spans 265 residues: Osteoclast-associated immunoglobulin-like receptor (265 aa).

The N-terminal stretch at 1 to 18 (MVLSLILQLSTLWPACRA) is a signal peptide. At 19–231 (DFTPTAPLAS…LDYTQGNLIR (213 aa)) the chain is on the extracellular side. 2 consecutive Ig-like domains span residues 22–115 (PTAP…SQPS) and 125–218 (QLPR…SFEG). The N-linked (GlcNAc...) asparagine glycan is linked to N47. An intrachain disulfide couples C52 to C99. An N-linked (GlcNAc...) asparagine glycan is attached at N144. Residues 232–248 (LGLAGMVLICLGIIVTC) traverse the membrane as a helical segment. Topologically, residues 249–265 (DWHSRSSAFDGLLPQQN) are cytoplasmic.

This sequence belongs to the leukocyte receptor complex/polymeric immunoglobulin receptor (PIR/LRC) family. As to expression, specifically expressed in preosteoclasts or mature osteoclasts.

The protein localises to the cell membrane. Functionally, regulator of osteoclastogenesis which plays an important bone-specific function in osteoclast differentiation. The chain is Osteoclast-associated immunoglobulin-like receptor (Oscar) from Mus musculus (Mouse).